The following is a 298-amino-acid chain: GTPase Era (298 aa).

Residues 3–170 enclose the Era-type G domain; it reads KSGFVAILGR…VQLLKDNLEE (168 aa). The tract at residues 11–18 is G1; sequence GRPNVGKS. 11-18 serves as a coordination point for GTP; the sequence is GRPNVGKS. The segment at 37–41 is G2; that stretch reads QSTRN. The segment at 58-61 is G3; the sequence is DTPG. Residues 58-62 and 120-123 each bind GTP; these read DTPGI and NKID. Residues 120-123 form a G4 region; that stretch reads NKID. A G5 region spans residues 149-151; that stretch reads ISA. One can recognise a KH type-2 domain in the interval 201 to 279; sequence TQQEVPHSVA…YLETWVKVKK (79 aa).

It belongs to the TRAFAC class TrmE-Era-EngA-EngB-Septin-like GTPase superfamily. Era GTPase family. Monomer.

The protein localises to the cytoplasm. The protein resides in the cell membrane. An essential GTPase that binds both GDP and GTP, with rapid nucleotide exchange. Plays a role in 16S rRNA processing and 30S ribosomal subunit biogenesis and possibly also in cell cycle regulation and energy metabolism. In Streptococcus equi subsp. zooepidemicus (strain H70), this protein is GTPase Era.